An 84-amino-acid chain; its full sequence is MPPVVIYTTAWCPYCIRAKQLLQRKGVDFQEIACDGKPELRAELARKAGSTTVPQIWIGETHVGGCDDLHALERAGKLDALLSA.

In terms of domain architecture, Glutaredoxin spans 1–84; it reads MPPVVIYTTA…AGKLDALLSA (84 aa). C12 and C15 are joined by a disulfide.

It belongs to the glutaredoxin family. As to quaternary structure, monomer.

The protein localises to the cytoplasm. In terms of biological role, has a glutathione-disulfide oxidoreductase activity in the presence of NADPH and glutathione reductase. Reduces low molecular weight disulfides and proteins. The chain is Glutaredoxin (grx) from Pseudomonas aeruginosa (strain ATCC 15692 / DSM 22644 / CIP 104116 / JCM 14847 / LMG 12228 / 1C / PRS 101 / PAO1).